The chain runs to 359 residues: Isopentenyl-diphosphate delta-isomerase (359 aa).

11 to 12 is a substrate binding site; sequence RK. Residues Ser68, 69-71, Ser99, and Asn127 contribute to the FMN site; that span reads GMT. 99 to 101 contributes to the substrate binding site; the sequence is SQR. A substrate-binding site is contributed by Gln163. Glu164 is a Mg(2+) binding site. Residues Lys199, Thr229, 278–280, and 299–300 contribute to the FMN site; these read GIR and AL.

It belongs to the IPP isomerase type 2 family. As to quaternary structure, homooctamer. Dimer of tetramers. FMN is required as a cofactor. The cofactor is NADPH. Mg(2+) serves as cofactor.

The protein localises to the cytoplasm. The enzyme catalyses isopentenyl diphosphate = dimethylallyl diphosphate. Inhibited by 3,4-epoxy-3-methylbutyl diphosphate (EIPP). Its function is as follows. Involved in the biosynthesis of isoprenoids. Catalyzes the 1,3-allylic rearrangement of the homoallylic substrate isopentenyl (IPP) to its allylic isomer, dimethylallyl diphosphate (DMAPP). The polypeptide is Isopentenyl-diphosphate delta-isomerase (Methanocaldococcus jannaschii (strain ATCC 43067 / DSM 2661 / JAL-1 / JCM 10045 / NBRC 100440) (Methanococcus jannaschii)).